The following is a 272-amino-acid chain: Energy-coupling factor transporter ATP-binding protein EcfA1 (272 aa).

One can recognise an ABC transporter domain in the interval 2-237 (IKVSDVCFSY…KNIIEKAKID (236 aa)). 37–44 (GHNGSGKS) provides a ligand contact to ATP.

It belongs to the ABC transporter superfamily. Energy-coupling factor EcfA family. As to quaternary structure, forms a stable energy-coupling factor (ECF) transporter complex composed of 2 membrane-embedded substrate-binding proteins (S component), 2 ATP-binding proteins (A component) and 2 transmembrane proteins (T component).

It localises to the cell membrane. Functionally, ATP-binding (A) component of a common energy-coupling factor (ECF) ABC-transporter complex. Unlike classic ABC transporters this ECF transporter provides the energy necessary to transport a number of different substrates. In Mesomycoplasma hyopneumoniae (strain J / ATCC 25934 / NCTC 10110) (Mycoplasma hyopneumoniae), this protein is Energy-coupling factor transporter ATP-binding protein EcfA1.